We begin with the raw amino-acid sequence, 260 residues long: BTB/POZ domain-containing protein KCTD21 (260 aa).

The BTB domain maps to 3–72 (DPITLNVGGK…LRTSHLDLPE (70 aa)). Positions 88 to 112 (QVQPLIEALQEKEVELSKAEKNAML) form a coiled coil.

As to quaternary structure, homopentamer. Interacts with KCTD11; KCTD21 and KCTD11 may associate in pentameric assemblies. Interacts (via BTB domain) with CUL3; indicative for a participation in a BCR (BTB-CUL3-RBX1) E3 ubiquitin-protein ligase complex. Highly expressed in cerebellum and brain. Expression is down-regulated in medulloblastoma.

The protein operates within protein modification; protein ubiquitination. In terms of biological role, probable substrate-specific adapter of a BCR (BTB-CUL3-RBX1) E3 ubiquitin-protein ligase complex mediating the ubiquitination and subsequent proteasomal degradation of target proteins. Promotes the ubiquitination of HDAC1. Can function as antagonist of the Hedgehog pathway by affecting the nuclear transfer of transcription factor GLI1; the function probably occurs via HDAC1 down-regulation, keeping GLI1 acetylated and inactive. Inhibits cell growth and tumorigenicity of medulloblastoma (MDB). The polypeptide is BTB/POZ domain-containing protein KCTD21 (KCTD21) (Homo sapiens (Human)).